A 358-amino-acid chain; its full sequence is L-tryptophan methyltransferase trpM (358 aa).

Belongs to the methyltransferase superfamily.

It carries out the reaction L-tryptophan + S-adenosyl-L-methionine = N(alpha)-methyl-L-tryptophan + S-adenosyl-L-homocysteine + H(+). It catalyses the reaction N(alpha)-methyl-L-tryptophan + S-adenosyl-L-methionine = N(alpha),N(alpha)-dimethyl-L-tryptophan + S-adenosyl-L-homocysteine + H(+). The enzyme catalyses N(alpha),N(alpha)-dimethyl-L-tryptophan + S-adenosyl-L-methionine = N(alpha),N(alpha),N(alpha)-trimethyl-L-tryptophan + S-adenosyl-L-homocysteine + H(+). In terms of biological role, methyltransferase that catalyzes iterative L-tryptophan N-methylations to produce L-abrine (N-alpha-methyl-L-tryptophan) and N,N-alpha-dimethyl-L-tryptophan. Also catalyzes a third methylation to yield L-hypaphorine (N,N,N-alpha-trimethyl-L-tryptopan), an agonist of the phytohormone indole-3-acetic acid. Can also N-methylate the non-native amino acid substrate 4-hydroxytryptophan, but the ability to incorporate trpM into a functional psilocybin biosynthesis pathway is indeed thwarted by the inability of the L-tryptophan decarboxylase psiD to use N,N-dimethyl-4-hydroxytryptophan as substrate. This chain is L-tryptophan methyltransferase trpM, found in Psilocybe serbica.